The following is a 197-amino-acid chain: A-kinase anchor protein 14 (197 aa).

Composition is skewed to polar residues over residues 1 to 11 (MSETQNSTSQK) and 19 to 29 (AASQTMPNTQD). The tract at residues 1–29 (MSETQNSTSQKAMDEDNKAASQTMPNTQD) is disordered. The RII-binding stretch occupies residues 35 to 52 (ELTQVALALVEDVINYAV).

As to quaternary structure, binds to type II regulatory subunits (RII). Present in cilia (at protein level). Expressed in tissues containing axoneme-based organelles (cilia and/or flagella): trachea and testis. Highly expressed in airway cilia.

The protein localises to the cytoplasm. Binds to type II regulatory subunits of protein kinase A and anchors/targets them. The polypeptide is A-kinase anchor protein 14 (AKAP14) (Homo sapiens (Human)).